The following is a 467-amino-acid chain: 2-succinylbenzoate--CoA ligase (467 aa).

This sequence belongs to the ATP-dependent AMP-binding enzyme family. MenE subfamily.

It catalyses the reaction 2-succinylbenzoate + ATP + CoA = 2-succinylbenzoyl-CoA + AMP + diphosphate. Its pathway is quinol/quinone metabolism; 1,4-dihydroxy-2-naphthoate biosynthesis; 1,4-dihydroxy-2-naphthoate from chorismate: step 5/7. It functions in the pathway quinol/quinone metabolism; menaquinone biosynthesis. Functionally, converts 2-succinylbenzoate (OSB) to 2-succinylbenzoyl-CoA (OSB-CoA). The polypeptide is 2-succinylbenzoate--CoA ligase (Listeria monocytogenes serotype 4b (strain F2365)).